A 348-amino-acid chain; its full sequence is MVSNLLKVVLAIETSCDETAVAVVRSDKQVLSHKVLSQKEHVVYGGVVPEIASRAHINYLYDLTSQSIEESGCDLADIDAIAVTSGPGLIGGLIIGVMMAKAISSVTNKPIIEVNHLEAHTLLIRMFHDIDFPFLVLIISGGHCQFLIVHDVGCYQRLGSSLDDSLGEVFDKVARMLNLGYPGGPIIEKKSIMGDSKSFFLPRALINRFGCDFSFSGIKTAVRNIVVNQKYIDNDFICNISASFQDCIGDILVNRITNAIHMSQAINCKINKLVVTGGVAANHLLRNRISICVKDNNFEVLYPPTELCTDNGIMVGWAGIENLSKGYVSNLDFVPKARWPLESIKRSS.

Residues His116 and His120 each coordinate Fe cation. Residues 138 to 142 (IISGG), Asp171, Gly184, and Asn282 each bind substrate. Residue Asp310 coordinates Fe cation.

It belongs to the KAE1 / TsaD family. Fe(2+) is required as a cofactor.

It is found in the cytoplasm. The enzyme catalyses L-threonylcarbamoyladenylate + adenosine(37) in tRNA = N(6)-L-threonylcarbamoyladenosine(37) in tRNA + AMP + H(+). Functionally, required for the formation of a threonylcarbamoyl group on adenosine at position 37 (t(6)A37) in tRNAs that read codons beginning with adenine. Is involved in the transfer of the threonylcarbamoyl moiety of threonylcarbamoyl-AMP (TC-AMP) to the N6 group of A37, together with TsaE and TsaB. TsaD likely plays a direct catalytic role in this reaction. This is tRNA N6-adenosine threonylcarbamoyltransferase from Ehrlichia ruminantium (strain Gardel).